The following is a 237-amino-acid chain: RING finger protein vilya (237 aa).

The RING-type zinc-finger motif lies at 21–69; it reads CNSCCALFCDKKHTFFLLACHHVFCERCVKVSAGRTPSDAPIFECSTCR. Residues 172–237 form a disordered region; it reads MHRMAQAYRS…IHPPNNSFDL (66 aa). The span at 180 to 195 shows a compositional bias: low complexity; it reads RSRSLTSQSSSSAQRS. Residues 221–237 show a composition bias toward polar residues; that stretch reads RQQITSFIHPPNNSFDL.

May interact with itself and with narya and nenya through their RING-type zinc fingers. Expressed in nurse cell and pro-oocytes (at protein level).

The protein resides in the chromosome. Its function is as follows. Required for the formation of DNA double-strand breaks during meiosis together with narya and nenya. This chain is RING finger protein vilya, found in Drosophila melanogaster (Fruit fly).